A 119-amino-acid chain; its full sequence is Large ribosomal subunit protein bL20 (119 aa).

This sequence belongs to the bacterial ribosomal protein bL20 family.

In terms of biological role, binds directly to 23S ribosomal RNA and is necessary for the in vitro assembly process of the 50S ribosomal subunit. It is not involved in the protein synthesizing functions of that subunit. The protein is Large ribosomal subunit protein bL20 of Thermoanaerobacter sp. (strain X514).